The following is a 225-amino-acid chain: MNSIKFPILDRTTKNSVISTTLNDLSNWSRLSSLWPLLYGTSCCFIEFASLIGSRFDFDRYGLVPRSSPRQADLILTAGTVTMKMAPSLVRLYEQMPEPKYVIAMGACTITGGMFSTDSYSTVRGVDKLIPVDVYLPGCPPKPEAVIDAITKLRKKIAREIYKDRIRPQQGNRCFTTNHKFFVVRSPHIGNYDQELLYPPSSTSEISTETFFKYKSPVSSHELVN.

[4Fe-4S] cluster-binding residues include C43, C44, C108, and C139.

It belongs to the complex I 20 kDa subunit family. NDH is composed of at least 16 different subunits, 5 of which are encoded in the nucleus. Requires [4Fe-4S] cluster as cofactor.

The protein localises to the plastid. It is found in the chloroplast thylakoid membrane. The enzyme catalyses a plastoquinone + NADH + (n+1) H(+)(in) = a plastoquinol + NAD(+) + n H(+)(out). The catalysed reaction is a plastoquinone + NADPH + (n+1) H(+)(in) = a plastoquinol + NADP(+) + n H(+)(out). Its function is as follows. NDH shuttles electrons from NAD(P)H:plastoquinone, via FMN and iron-sulfur (Fe-S) centers, to quinones in the photosynthetic chain and possibly in a chloroplast respiratory chain. The immediate electron acceptor for the enzyme in this species is believed to be plastoquinone. Couples the redox reaction to proton translocation, and thus conserves the redox energy in a proton gradient. This chain is NAD(P)H-quinone oxidoreductase subunit K, chloroplastic, found in Arabidopsis thaliana (Mouse-ear cress).